The following is a 334-amino-acid chain: o-succinylbenzoate synthase (334 aa).

Residue Lys-107 is the Proton donor of the active site. 3 residues coordinate Mg(2+): Asp-135, Glu-162, and Asp-185. Residue Lys-209 is the Proton acceptor of the active site.

The protein belongs to the mandelate racemase/muconate lactonizing enzyme family. MenC type 1 subfamily. It depends on a divalent metal cation as a cofactor.

It carries out the reaction (1R,6R)-6-hydroxy-2-succinyl-cyclohexa-2,4-diene-1-carboxylate = 2-succinylbenzoate + H2O. Its pathway is quinol/quinone metabolism; 1,4-dihydroxy-2-naphthoate biosynthesis; 1,4-dihydroxy-2-naphthoate from chorismate: step 4/7. It participates in quinol/quinone metabolism; menaquinone biosynthesis. Converts 2-succinyl-6-hydroxy-2,4-cyclohexadiene-1-carboxylate (SHCHC) to 2-succinylbenzoate (OSB). In Mycobacterium leprae (strain TN), this protein is o-succinylbenzoate synthase.